The sequence spans 200 residues: Imidazoleglycerol-phosphate dehydratase (200 aa).

The protein belongs to the imidazoleglycerol-phosphate dehydratase family.

It localises to the cytoplasm. It catalyses the reaction D-erythro-1-(imidazol-4-yl)glycerol 3-phosphate = 3-(imidazol-4-yl)-2-oxopropyl phosphate + H2O. The protein operates within amino-acid biosynthesis; L-histidine biosynthesis; L-histidine from 5-phospho-alpha-D-ribose 1-diphosphate: step 6/9. This is Imidazoleglycerol-phosphate dehydratase from Bifidobacterium animalis subsp. lactis (strain AD011).